A 290-amino-acid chain; its full sequence is tRNA-cytidine(32) 2-sulfurtransferase (290 aa).

Positions 36 to 41 (SGGKDS) match the PP-loop motif motif. [4Fe-4S] cluster-binding residues include C111, C114, and C202. Positions 259-290 (DPWLDAEDEEAEDCGEPAGDGVVSLGGARGGR) are disordered. Acidic residues predominate over residues 262 to 273 (LDAEDEEAEDCG).

The protein belongs to the TtcA family. Homodimer. Requires Mg(2+) as cofactor. It depends on [4Fe-4S] cluster as a cofactor.

The protein localises to the cytoplasm. The enzyme catalyses cytidine(32) in tRNA + S-sulfanyl-L-cysteinyl-[cysteine desulfurase] + AH2 + ATP = 2-thiocytidine(32) in tRNA + L-cysteinyl-[cysteine desulfurase] + A + AMP + diphosphate + H(+). Its pathway is tRNA modification. In terms of biological role, catalyzes the ATP-dependent 2-thiolation of cytidine in position 32 of tRNA, to form 2-thiocytidine (s(2)C32). The sulfur atoms are provided by the cysteine/cysteine desulfurase (IscS) system. The sequence is that of tRNA-cytidine(32) 2-sulfurtransferase from Anaeromyxobacter dehalogenans (strain 2CP-C).